The primary structure comprises 72 residues: Small ribosomal subunit protein bS18 (72 aa).

This sequence belongs to the bacterial ribosomal protein bS18 family. As to quaternary structure, part of the 30S ribosomal subunit. Forms a tight heterodimer with protein bS6.

Functionally, binds as a heterodimer with protein bS6 to the central domain of the 16S rRNA, where it helps stabilize the platform of the 30S subunit. This chain is Small ribosomal subunit protein bS18, found in Fusobacterium nucleatum subsp. nucleatum (strain ATCC 25586 / DSM 15643 / BCRC 10681 / CIP 101130 / JCM 8532 / KCTC 2640 / LMG 13131 / VPI 4355).